Consider the following 336-residue polypeptide: 25S rRNA (uridine(2634)-N(3))-methyltransferase (336 aa).

The interval 286–307 (PGYHHRRTNSEQDTTKPAKERD) is disordered. Positions 293–307 (TNSEQDTTKPAKERD) are enriched in basic and acidic residues.

This sequence belongs to the class I-like SAM-binding methyltransferase superfamily. BMT5 family.

The protein localises to the nucleus. It localises to the nucleolus. It carries out the reaction uridine(2634) in 25S rRNA + S-adenosyl-L-methionine = N(3)-methyluridine(2634) in 25S rRNA + S-adenosyl-L-homocysteine + H(+). In terms of biological role, S-adenosyl-L-methionine-dependent methyltransferase that specifically methylates the N(3) position of uridine 2634 (m3U2634) in 25S rRNA. This Saccharomyces cerevisiae (strain ATCC 204508 / S288c) (Baker's yeast) protein is 25S rRNA (uridine(2634)-N(3))-methyltransferase (BMT5).